Consider the following 271-residue polypeptide: Tryptophan synthase alpha chain (271 aa).

Residues E56 and D67 each act as proton acceptor in the active site.

Belongs to the TrpA family. As to quaternary structure, tetramer of two alpha and two beta chains.

The enzyme catalyses (1S,2R)-1-C-(indol-3-yl)glycerol 3-phosphate + L-serine = D-glyceraldehyde 3-phosphate + L-tryptophan + H2O. It participates in amino-acid biosynthesis; L-tryptophan biosynthesis; L-tryptophan from chorismate: step 5/5. The alpha subunit is responsible for the aldol cleavage of indoleglycerol phosphate to indole and glyceraldehyde 3-phosphate. The polypeptide is Tryptophan synthase alpha chain (Mycobacterium intracellulare).